A 305-amino-acid polypeptide reads, in one-letter code: Translation initiation factor eIF2B subunit alpha (305 aa).

Ser-2 carries the N-acetylserine modification. The residue at position 291 (Thr-291) is a Phosphothreonine.

Belongs to the eIF-2B alpha/beta/delta subunits family. Component of the translation initiation factor 2B (eIF2B) complex which is a heterodecamer of two sets of five different subunits: alpha, beta, gamma, delta and epsilon. Subunits alpha, beta and delta comprise a regulatory subcomplex and subunits epsilon and gamma comprise a catalytic subcomplex. Within the complex, the hexameric regulatory complex resides at the center, with the two heterodimeric catalytic subcomplexes bound on opposite sides.

It is found in the cytoplasm. Its subcellular location is the cytosol. Functionally, acts as a component of the translation initiation factor 2B (eIF2B) complex, which catalyzes the exchange of GDP for GTP on the eukaryotic initiation factor 2 (eIF2) complex gamma subunit. Its guanine nucleotide exchange factor activity is repressed when bound to eIF2 complex phosphorylated on the alpha subunit, thereby limiting the amount of methionyl-initiator methionine tRNA available to the ribosome and consequently global translation is repressed. It activates the translation of GCN4 in response to low amino acid, carbon, or purine availability, by suppressing the inhibitory effects of multiple uORFs present in the leader of GCN4 mRNA. It may promote either repression or activation of GCN4 expression depending on amino acid availability. Modulation of GCN3 regulatory function in response to amino acid availability occurs post-translationally. This chain is Translation initiation factor eIF2B subunit alpha, found in Saccharomyces cerevisiae (strain ATCC 204508 / S288c) (Baker's yeast).